A 219-amino-acid chain; its full sequence is MAETAPAAAPAAAPAPAAKAAAKKPKKAAGGAKARKPAGPSVTELITKAVSASKERKGLSLAALKKALAAGGYDVEKNNSRIKLGLKSLVSKGTLVQTKGTGASGSFRLSKKPGEGLEKAPKKKASAAKPKKAAAKKPAAAAKKPKKAVAVKKSPKKAKKPAASATKKSVKSPKKAAKPKKAVAAKSPAKAKAVKPKAAKPKAAKPKAAKAKKAAAKKK.

Composition is skewed to low complexity over residues 1–20 (MAET…AAKA) and 28–40 (AAGG…PAGP). Disordered regions lie at residues 1–42 (MAET…GPSV) and 89–219 (LVSK…AKKK). The H15 domain maps to 38-111 (AGPSVTELIT…GASGSFRLSK (74 aa)). Composition is skewed to basic residues over residues 121–135 (PKKK…KAAA), 143–160 (KKPK…KAKK), 168–183 (KSVK…KKAV), and 192–219 (KAVK…AKKK).

It belongs to the histone H1/H5 family.

The protein localises to the nucleus. Its subcellular location is the chromosome. Functionally, histones H1 are necessary for the condensation of nucleosome chains into higher-order structures. The polypeptide is Histone H1.11R (Gallus gallus (Chicken)).